The following is a 163-amino-acid chain: Homoaconitase small subunit (163 aa).

Belongs to the LeuD family. Heterodimer of HacA and HacB.

It carries out the reaction (2R,3S)-homoisocitrate = cis-homoaconitate + H2O. It functions in the pathway amino-acid biosynthesis; L-lysine biosynthesis via AAA pathway; L-alpha-aminoadipate from 2-oxoglutarate: step 3/5. Is not inhibited by lysine. Functionally, catalyzes the reversible hydration of cis-homoaconitate ((Z)-but-1-ene-1,2,4-tricarboxylate) to homoisocitrate ((1R,2S)-1-hydroxybutane-1,2,4-tricarboxylate). Can catalyze neither the dehydration of (R)-homocitrate ((2R)-2-hydroxybutane-1,2,4-tricarboxylate) into cis-homoaconitate in vitro, nor the reverse reaction. Is not active toward (S)-homocitrate, cis-aconitate or citrate as substrate. The polypeptide is Homoaconitase small subunit (hacB) (Thermus thermophilus (strain ATCC BAA-163 / DSM 7039 / HB27)).